A 455-amino-acid chain; its full sequence is Bifunctional protein GlmU (455 aa).

Residues 1 to 226 (MGLSVVILAA…EFEILGVNDR (226 aa)) are pyrophosphorylase. UDP-N-acetyl-alpha-D-glucosamine-binding positions include 8–11 (LAAG), Lys22, Gln73, 78–79 (GT), 99–101 (YGD), Gly136, Glu151, Asn166, and Asn224. A Mg(2+)-binding site is contributed by Asp101. Asn224 is a Mg(2+) binding site. The tract at residues 227–247 (TQLASLERVWQRNVAEKIMAK) is linker. An N-acetyltransferase region spans residues 248–455 (GVSIADPNRF…WQRSVKKTDK (208 aa)). UDP-N-acetyl-alpha-D-glucosamine-binding residues include Arg330 and Lys348. His360 (proton acceptor) is an active-site residue. Residues Tyr363 and Asn374 each coordinate UDP-N-acetyl-alpha-D-glucosamine. Residues Ala377, 383 to 384 (NY), Ser402, Ala420, and Arg437 each bind acetyl-CoA.

It in the N-terminal section; belongs to the N-acetylglucosamine-1-phosphate uridyltransferase family. The protein in the C-terminal section; belongs to the transferase hexapeptide repeat family. In terms of assembly, homotrimer. Mg(2+) is required as a cofactor.

It is found in the cytoplasm. The enzyme catalyses alpha-D-glucosamine 1-phosphate + acetyl-CoA = N-acetyl-alpha-D-glucosamine 1-phosphate + CoA + H(+). It carries out the reaction N-acetyl-alpha-D-glucosamine 1-phosphate + UTP + H(+) = UDP-N-acetyl-alpha-D-glucosamine + diphosphate. It participates in nucleotide-sugar biosynthesis; UDP-N-acetyl-alpha-D-glucosamine biosynthesis; N-acetyl-alpha-D-glucosamine 1-phosphate from alpha-D-glucosamine 6-phosphate (route II): step 2/2. The protein operates within nucleotide-sugar biosynthesis; UDP-N-acetyl-alpha-D-glucosamine biosynthesis; UDP-N-acetyl-alpha-D-glucosamine from N-acetyl-alpha-D-glucosamine 1-phosphate: step 1/1. It functions in the pathway bacterial outer membrane biogenesis; LPS lipid A biosynthesis. In terms of biological role, catalyzes the last two sequential reactions in the de novo biosynthetic pathway for UDP-N-acetylglucosamine (UDP-GlcNAc). The C-terminal domain catalyzes the transfer of acetyl group from acetyl coenzyme A to glucosamine-1-phosphate (GlcN-1-P) to produce N-acetylglucosamine-1-phosphate (GlcNAc-1-P), which is converted into UDP-GlcNAc by the transfer of uridine 5-monophosphate (from uridine 5-triphosphate), a reaction catalyzed by the N-terminal domain. The protein is Bifunctional protein GlmU of Francisella tularensis subsp. tularensis (strain FSC 198).